Reading from the N-terminus, the 271-residue chain is ABC transporter I family member 10 (271 aa).

In terms of domain architecture, ABC transporter spans 40-267 (VECRNLCFSV…IKAKQSSYID (228 aa)). 77–84 (GPNGCGKS) provides a ligand contact to ATP.

The protein belongs to the ABC transporter superfamily. ABCI family.

The polypeptide is ABC transporter I family member 10 (ABCI10) (Arabidopsis thaliana (Mouse-ear cress)).